A 309-amino-acid chain; its full sequence is Ribonuclease Z (309 aa).

Zn(2+)-binding residues include histidine 63, histidine 65, aspartate 67, histidine 68, histidine 145, aspartate 216, and histidine 274. Residue aspartate 67 is the Proton acceptor of the active site.

The protein belongs to the RNase Z family. Homodimer. Zn(2+) is required as a cofactor.

It carries out the reaction Endonucleolytic cleavage of RNA, removing extra 3' nucleotides from tRNA precursor, generating 3' termini of tRNAs. A 3'-hydroxy group is left at the tRNA terminus and a 5'-phosphoryl group is left at the trailer molecule.. Its function is as follows. Zinc phosphodiesterase, which displays some tRNA 3'-processing endonuclease activity. Probably involved in tRNA maturation, by removing a 3'-trailer from precursor tRNA. The protein is Ribonuclease Z of Streptococcus agalactiae serotype V (strain ATCC BAA-611 / 2603 V/R).